A 71-amino-acid chain; its full sequence is Large ribosomal subunit protein uL29 (71 aa).

Belongs to the universal ribosomal protein uL29 family.

This chain is Large ribosomal subunit protein uL29, found in Rickettsia akari (strain Hartford).